The chain runs to 314 residues: Bifunctional riboflavin kinase/FMN adenylyltransferase (314 aa).

It belongs to the RibF family.

It catalyses the reaction riboflavin + ATP = FMN + ADP + H(+). It carries out the reaction FMN + ATP + H(+) = FAD + diphosphate. It participates in cofactor biosynthesis; FAD biosynthesis; FAD from FMN: step 1/1. The protein operates within cofactor biosynthesis; FMN biosynthesis; FMN from riboflavin (ATP route): step 1/1. Functionally, catalyzes the phosphorylation of riboflavin to FMN followed by the adenylation of FMN to FAD. Can also catalyze the phosphorylation of the toxic riboflavin analogs 8-demethyl-8-aminoriboflavin (AF) to 8-demethyl-8-aminoriboflavin mononucleotide (AFMN) and roseoflavin (RoF) to roseoflavin mononucleotide (RoFMN), and the adenylation of AFMN to 8-demethyl-8-aminoriboflavin adenine dinucleotide (AFAD). The sequence is that of Bifunctional riboflavin kinase/FMN adenylyltransferase from Listeria monocytogenes serovar 1/2a (strain ATCC BAA-679 / EGD-e).